Consider the following 93-residue polypeptide: uncharacterized protein (93 aa).

This is an uncharacterized protein from Sulfolobus islandicus filamentous virus (isolate Iceland/Hveragerdi) (SIFV).